We begin with the raw amino-acid sequence, 438 residues long: Proline--tRNA ligase (438 aa).

Belongs to the class-II aminoacyl-tRNA synthetase family. ProS type 2 subfamily. In terms of assembly, homodimer.

It localises to the cytoplasm. It catalyses the reaction tRNA(Pro) + L-proline + ATP = L-prolyl-tRNA(Pro) + AMP + diphosphate. Catalyzes the attachment of proline to tRNA(Pro) in a two-step reaction: proline is first activated by ATP to form Pro-AMP and then transferred to the acceptor end of tRNA(Pro). This Rickettsia canadensis (strain McKiel) protein is Proline--tRNA ligase.